Here is a 133-residue protein sequence, read N- to C-terminus: NADPH-dependent 7-cyano-7-deazaguanine reductase (133 aa).

Residue cysteine 48 is the Thioimide intermediate of the active site. Residue aspartate 55 is the Proton donor of the active site. Residues valine 70 to leucine 72 and glutamine 89 to glutamate 90 contribute to the substrate site.

This sequence belongs to the GTP cyclohydrolase I family. QueF type 1 subfamily.

The protein resides in the cytoplasm. The catalysed reaction is 7-aminomethyl-7-carbaguanine + 2 NADP(+) = 7-cyano-7-deazaguanine + 2 NADPH + 3 H(+). Its pathway is tRNA modification; tRNA-queuosine biosynthesis. Functionally, catalyzes the NADPH-dependent reduction of 7-cyano-7-deazaguanine (preQ0) to 7-aminomethyl-7-deazaguanine (preQ1). The polypeptide is NADPH-dependent 7-cyano-7-deazaguanine reductase (Thermoanaerobacter pseudethanolicus (strain ATCC 33223 / 39E) (Clostridium thermohydrosulfuricum)).